A 130-amino-acid polypeptide reads, in one-letter code: Small ribosomal subunit protein uS8 (130 aa).

This sequence belongs to the universal ribosomal protein uS8 family. In terms of assembly, part of the 30S ribosomal subunit.

Functionally, one of the primary rRNA binding proteins, it binds directly to 16S rRNA central domain where it helps coordinate assembly of the platform of the 30S subunit. The protein is Small ribosomal subunit protein uS8 of Thermococcus sibiricus (strain DSM 12597 / MM 739).